We begin with the raw amino-acid sequence, 245 residues long: Ubiquinone/menaquinone biosynthesis C-methyltransferase UbiE (245 aa).

Residues Thr-71, Asp-92, and 118–119 (DA) each bind S-adenosyl-L-methionine.

Belongs to the class I-like SAM-binding methyltransferase superfamily. MenG/UbiE family.

The enzyme catalyses a 2-demethylmenaquinol + S-adenosyl-L-methionine = a menaquinol + S-adenosyl-L-homocysteine + H(+). It catalyses the reaction a 2-methoxy-6-(all-trans-polyprenyl)benzene-1,4-diol + S-adenosyl-L-methionine = a 5-methoxy-2-methyl-3-(all-trans-polyprenyl)benzene-1,4-diol + S-adenosyl-L-homocysteine + H(+). It participates in quinol/quinone metabolism; menaquinone biosynthesis; menaquinol from 1,4-dihydroxy-2-naphthoate: step 2/2. The protein operates within cofactor biosynthesis; ubiquinone biosynthesis. In terms of biological role, methyltransferase required for the conversion of demethylmenaquinol (DMKH2) to menaquinol (MKH2) and the conversion of 2-polyprenyl-6-methoxy-1,4-benzoquinol (DDMQH2) to 2-polyprenyl-3-methyl-6-methoxy-1,4-benzoquinol (DMQH2). The protein is Ubiquinone/menaquinone biosynthesis C-methyltransferase UbiE of Neisseria meningitidis serogroup C (strain 053442).